Consider the following 323-residue polypeptide: ATP synthase gamma chain (323 aa).

The tract at residues Asn206–Ile240 is insert.

The protein belongs to the ATPase gamma chain family. F-type ATPases have 2 components, CF(1) - the catalytic core - and CF(0) - the membrane proton channel. CF(1) has five subunits: alpha(3), beta(3), gamma(1), delta(1), epsilon(1). CF(0) has three main subunits: a, b and c.

The protein localises to the cell inner membrane. Functionally, produces ATP from ADP in the presence of a proton gradient across the membrane. The gamma chain is believed to be important in regulating ATPase activity and the flow of protons through the CF(0) complex. This Rickettsia conorii (strain ATCC VR-613 / Malish 7) protein is ATP synthase gamma chain.